Consider the following 59-residue polypeptide: Large ribosomal subunit protein bL32 (59 aa).

A compositionally biased stretch (basic residues) spans 1–19; the sequence is MPVPKRRMSRSNTRSRRAQ. The segment at 1–20 is disordered; sequence MPVPKRRMSRSNTRSRRAQW.

The protein belongs to the bacterial ribosomal protein bL32 family.

In Acidothermus cellulolyticus (strain ATCC 43068 / DSM 8971 / 11B), this protein is Large ribosomal subunit protein bL32.